The sequence spans 553 residues: Arginine--tRNA ligase (553 aa).

The 'HIGH' region signature appears at 130 to 140 (ANPTGDLHIGH).

This sequence belongs to the class-I aminoacyl-tRNA synthetase family. As to quaternary structure, monomer.

The protein localises to the cytoplasm. It carries out the reaction tRNA(Arg) + L-arginine + ATP = L-arginyl-tRNA(Arg) + AMP + diphosphate. In Staphylococcus aureus (strain MSSA476), this protein is Arginine--tRNA ligase.